Consider the following 958-residue polypeptide: Dermatan-sulfate epimerase (958 aa).

Residues 1–22 (MRTHTRGAPSVFFIYLLCFVSA) form the signal peptide. The Lumenal portion of the chain corresponds to 23-902 (YITDENPEVM…APSLSASYTR (880 aa)). N-linked (GlcNAc...) (complex) asparagine glycosylation is present at N183. The active-site Proton donor is the H205. Residue Y261 is part of the active site. An N-linked (GlcNAc...) (high mannose) asparagine glycan is attached at N336. N-linked (GlcNAc...) (complex) asparagine glycosylation is present at N411. Positions 452 and 470 each coordinate Mn(2+). Residue Y473 is part of the active site. A Mn(2+)-binding site is contributed by N481. N642 is a glycosylation site (N-linked (GlcNAc...) (complex) asparagine). N-linked (GlcNAc...) (paucimannose) asparagine glycosylation is present at N648. A helical transmembrane segment spans residues 903-923 (LFLILNIAIFFVMLAMQLTYF). Residues 924–933 (QRAQSLHGQR) lie on the Cytoplasmic side of the membrane. A helical membrane pass occupies residues 934-954 (CLYAVLLIDSCILLWLYSSCS). Residues 955-958 (QSQC) are Lumenal-facing.

It belongs to the dermatan-sulfate isomerase family. Mn(2+) serves as cofactor. Post-translationally, N-glycosylated. Glycosylation is important for enzymatic activity. Ubiquitously expressed with higher expression in kidney and ovary and lower expression in brain, colon and thymus. Also expressed in renal cell carcinomas, brain tumors, and in a part of melanomas and adenocarcinomas from organs other than the breast. Expressed in squamous cell carcinomas (SCC), glioma, and some adenocarcinoma cell lines, but not in breast cancer cell lines or any normal tissues (at protein level).

Its subcellular location is the endoplasmic reticulum membrane. It is found in the golgi apparatus membrane. The protein localises to the cytoplasmic vesicle membrane. It localises to the microsome membrane. The catalysed reaction is chondroitin 4'-sulfate = dermatan 4'-sulfate. Its pathway is glycan metabolism; chondroitin sulfate biosynthesis. It participates in glycan metabolism; heparan sulfate biosynthesis. Functionally, converts D-glucuronic acid to L-iduronic acid (IdoUA) residues. Plays an important role in the biosynthesis of the glycosaminoglycan/mucopolysaccharide dermatan sulfate. The protein is Dermatan-sulfate epimerase (DSE) of Homo sapiens (Human).